A 544-amino-acid polypeptide reads, in one-letter code: Chaperonin GroEL 2 (544 aa).

Residues 29–32, 86–90, Gly-413, 479–481, and Asp-495 contribute to the ATP site; these read TLGP, DGTTT, and NAA.

Belongs to the chaperonin (HSP60) family. In terms of assembly, forms a cylinder of 14 subunits composed of two heptameric rings stacked back-to-back. Interacts with the co-chaperonin GroES.

It localises to the cytoplasm. The enzyme catalyses ATP + H2O + a folded polypeptide = ADP + phosphate + an unfolded polypeptide.. Functionally, together with its co-chaperonin GroES, plays an essential role in assisting protein folding. The GroEL-GroES system forms a nano-cage that allows encapsulation of the non-native substrate proteins and provides a physical environment optimized to promote and accelerate protein folding. This chain is Chaperonin GroEL 2, found in Synechococcus sp. (strain CC9605).